A 101-amino-acid chain; its full sequence is Small ribosomal subunit protein uS14 (101 aa).

This sequence belongs to the universal ribosomal protein uS14 family. As to quaternary structure, part of the 30S ribosomal subunit. Contacts proteins S3 and S10.

Functionally, binds 16S rRNA, required for the assembly of 30S particles and may also be responsible for determining the conformation of the 16S rRNA at the A site. The protein is Small ribosomal subunit protein uS14 of Gluconobacter oxydans (strain 621H) (Gluconobacter suboxydans).